A 364-amino-acid polypeptide reads, in one-letter code: Zinc finger protein CONSTANS-LIKE 12 (364 aa).

Positions 5, 8, 28, and 33 each coordinate Zn(2+). The B box-type 1; atypical zinc finger occupies 5-47 (CDHCATSQALIYCKSDLAKLCLNCDVHVHSANPLSHRHIRSLI). Residues 48 to 88 (CEKCFSQPAAIRCLDEKVSYCQGCHWHESNCSELGHRVQSL) form a B box-type 2; degenerate zinc finger. Residues 280-322 (QDCGMSPGFIMSEAPWETNFEVSCPQARNEAKLRYKEKKLKRS) form the CCT domain.

Belongs to the CONSTANS family.

It localises to the nucleus. This chain is Zinc finger protein CONSTANS-LIKE 12 (COL12), found in Arabidopsis thaliana (Mouse-ear cress).